The primary structure comprises 233 residues: Cilia- and flagella-associated protein 299 (233 aa).

It localises to the cytoplasm. It is found in the nucleus. Its function is as follows. May be involved in spermatogenesis. The chain is Cilia- and flagella-associated protein 299 from Homo sapiens (Human).